A 202-amino-acid polypeptide reads, in one-letter code: Na(+)-translocating NADH-quinone reductase subunit E (202 aa).

Transmembrane regions (helical) follow at residues 11 to 31 (SIFMENMALAFFLGMCTFLAV), 41 to 61 (LGVAVIVVLGISVPVNQIIYF), 81 to 101 (FLGFITFIGVIAALVQILEMV), 114 to 134 (GIYLPLITVNCAILGGVLFMV), 144 to 164 (LVYGVGSGVGWMLAIVLLAGI), and 180 to 200 (LGITFTTAGLMAIAFMSFSGI).

The protein belongs to the NqrDE/RnfAE family. As to quaternary structure, composed of six subunits; NqrA, NqrB, NqrC, NqrD, NqrE and NqrF.

It localises to the cell inner membrane. It catalyses the reaction a ubiquinone + n Na(+)(in) + NADH + H(+) = a ubiquinol + n Na(+)(out) + NAD(+). NQR complex catalyzes the reduction of ubiquinone-1 to ubiquinol by two successive reactions, coupled with the transport of Na(+) ions from the cytoplasm to the periplasm. NqrA to NqrE are probably involved in the second step, the conversion of ubisemiquinone to ubiquinol. This is Na(+)-translocating NADH-quinone reductase subunit E from Psychromonas ingrahamii (strain DSM 17664 / CCUG 51855 / 37).